Here is a 256-residue protein sequence, read N- to C-terminus: MMLAIDIGNSSIVTGVYDENDQLAFIFRIATTHDKTSDEYAMLLHSFFEQKGCRFNDVTGVIIASVVPTIMHRFRRMCQDYLHVTPLIVGPGIRTGLSIHYQDPKEVGADRIANAVAAIARYGAPCIVVDIGTATTFCCIDAKHRYRGGVIAPGAAISTAALSNKASKLPKIELTKPASVVGKTTVASMESGTFYGHIAMIDGVVERIKEEQRLDDAKVIATGGLAYLYAEESKQIQHLEQELTLSGLKYIYDKNQ.

6–13 (DIGNSSIV) contributes to the ATP binding site. Substrate-binding positions include Y101 and 108 to 111 (GADR). D110 serves as the catalytic Proton acceptor. D130 contributes to the K(+) binding site. T133 is an ATP binding site. T185 is a binding site for substrate.

Belongs to the type III pantothenate kinase family. In terms of assembly, homodimer. The cofactor is NH4(+). It depends on K(+) as a cofactor.

It is found in the cytoplasm. It carries out the reaction (R)-pantothenate + ATP = (R)-4'-phosphopantothenate + ADP + H(+). Its pathway is cofactor biosynthesis; coenzyme A biosynthesis; CoA from (R)-pantothenate: step 1/5. In terms of biological role, catalyzes the phosphorylation of pantothenate (Pan), the first step in CoA biosynthesis. This is Type III pantothenate kinase from Shouchella clausii (strain KSM-K16) (Alkalihalobacillus clausii).